An 801-amino-acid polypeptide reads, in one-letter code: Phosphatidylinositol 3-kinase pik3 (801 aa).

One can recognise a C2 PI3K-type domain in the interval 14 to 166; the sequence is VTARFLVKFC…RLDGLLLKLQ (153 aa). A PIK helical domain is found at 257–439; the sequence is DKDLKPNSKI…SSVMFLFQKE (183 aa). The PI3K/PI4K catalytic domain occupies 515–785; it reads IPDACTVFKS…LINDSVSALF (271 aa). Residues 521–527 form a G-loop region; that stretch reads VFKSTMQ. Residues 654–662 are catalytic loop; it reads GVGDRHLDN. Positions 673 to 694 are activation loop; the sequence is HADFGYILGRDPKLFSPAMKLS.

Belongs to the PI3/PI4-kinase family. In terms of assembly, component of the autophagy-specific vps34 PI3-kinase complex I composed of vps15, atg6, pik3/vps34, atg14 and atg38. Also a component of the VPS34 PI3-kinase complex II composed of atg6, pik3, vps15 and vps38.

The catalysed reaction is a 1,2-diacyl-sn-glycero-3-phospho-(1D-myo-inositol) + ATP = a 1,2-diacyl-sn-glycero-3-phospho-(1D-myo-inositol-3-phosphate) + ADP + H(+). Functionally, phosphatidylinositol 3-kinase that functions as a part of the autophagy-specific VPS34 PI3-kinase complex I that plays a role in autophagosome assembly. This complex is essential to recruit the atg8-phosphatidylinositol conjugate and the atg12-atg5 conjugate to the pre-autophagosomal structure. Also functions as part of the VPS34 PI3-kinase complex II. The chain is Phosphatidylinositol 3-kinase pik3 (pik3) from Schizosaccharomyces pombe (strain 972 / ATCC 24843) (Fission yeast).